A 529-amino-acid chain; its full sequence is AAA ATPase forming ring-shaped complexes (529 aa).

Residues 15–62 are a coiled coil; the sequence is MERQDERLRSLSEANDRLMAKNHALAKALTRATQELTKAKAQLNQLAG. 253 to 258 is a binding site for ATP; that stretch reads GNGKTL.

This sequence belongs to the AAA ATPase family. As to quaternary structure, homohexamer. Assembles into a hexameric ring structure.

In Bifidobacterium dentium (strain ATCC 27534 / DSM 20436 / JCM 1195 / Bd1), this protein is AAA ATPase forming ring-shaped complexes.